The following is a 306-amino-acid chain: Acetylglutamate kinase (306 aa).

Residues 75–76 (GG), Arg97, and Asn197 contribute to the substrate site.

It belongs to the acetylglutamate kinase family. ArgB subfamily.

The protein localises to the cytoplasm. It catalyses the reaction N-acetyl-L-glutamate + ATP = N-acetyl-L-glutamyl 5-phosphate + ADP. Its pathway is amino-acid biosynthesis; L-arginine biosynthesis; N(2)-acetyl-L-ornithine from L-glutamate: step 2/4. Functionally, catalyzes the ATP-dependent phosphorylation of N-acetyl-L-glutamate. This is Acetylglutamate kinase from Streptomyces coelicolor (strain ATCC BAA-471 / A3(2) / M145).